The following is a 73-amino-acid chain: Small ribosomal subunit protein bS21 (73 aa).

The protein belongs to the bacterial ribosomal protein bS21 family.

In Parvibaculum lavamentivorans (strain DS-1 / DSM 13023 / NCIMB 13966), this protein is Small ribosomal subunit protein bS21.